The chain runs to 573 residues: O-fucosyltransferase 20 (573 aa).

Over 1 to 60 (MALSKNSNSNSFNKKKVSYISVPSQIINSLSSSSLQSLLVSPKKSSRSTNRFSFSYRNPR) the chain is Cytoplasmic. Residues 61 to 81 (IWFFTLFLVSLFGMLKLGFNV) form a helical; Signal-anchor for type II membrane protein membrane-spanning segment. Residues 82-573 (DPISLPFSRY…RQQQEQQSDA (492 aa)) lie on the Lumenal side of the membrane. Asn138 is a glycosylation site (N-linked (GlcNAc...) asparagine). Substrate is bound at residue 344–346 (HLR). N-linked (GlcNAc...) asparagine glycosylation is found at Asn385 and Asn517. Over residues 547–556 (AGKDVTKHPV) the composition is skewed to basic and acidic residues. The interval 547–573 (AGKDVTKHPVPECMCSDRQQQEQQSDA) is disordered. Polar residues predominate over residues 563–573 (DRQQQEQQSDA).

The protein belongs to the glycosyltransferase GT106 family. Interacts with RACK1A. In terms of tissue distribution, highly expressed in shoot apical meristem (SAM) and in young vegetative tissues.

Its subcellular location is the golgi apparatus membrane. Its pathway is glycan metabolism. Functionally, may play a role in the biosynthesis of matrix polysaccharides and contribute to the biomechanics and development of the plant cell wall. The chain is O-fucosyltransferase 20 from Arabidopsis thaliana (Mouse-ear cress).